A 374-amino-acid polypeptide reads, in one-letter code: Cyclin-dependent kinase 9 (374 aa).

Residues 19–318 enclose the Protein kinase domain; that stretch reads YEKLAKIGQG…SDDALNHDFF (300 aa). ATP contacts are provided by residues 25-33 and Lys-48; that span reads IGQGTFGEV. Residue Asp-151 is the Proton acceptor of the active site. A disordered region spans residues 345-374; it reads PRRRGHMPQQPANQNRNPATTSQSEFDRVF. Over residues 354 to 368 the composition is skewed to polar residues; that stretch reads QPANQNRNPATTSQS.

Belongs to the protein kinase superfamily. CMGC Ser/Thr protein kinase family. CDC2/CDKX subfamily. In terms of assembly, component of the super elongation complex (SEC). Associates with ccnt1/cyclin-T1, ccnt2/cyclin-T2 or ccnk/cyclin-K to form active P-TEFb.

The protein resides in the nucleus. It localises to the cytoplasm. Its subcellular location is the PML body. The catalysed reaction is L-seryl-[protein] + ATP = O-phospho-L-seryl-[protein] + ADP + H(+). The enzyme catalyses L-threonyl-[protein] + ATP = O-phospho-L-threonyl-[protein] + ADP + H(+). It carries out the reaction [DNA-directed RNA polymerase] + ATP = phospho-[DNA-directed RNA polymerase] + ADP + H(+). Protein kinase involved in the regulation of transcription. Member of the cyclin-dependent kinase pair (CDK9/cyclin-T) complex, also called positive transcription elongation factor b (P-TEFb), which facilitates the transition from abortive to productive elongation by phosphorylating the CTD (C-terminal domain) of the large subunit of RNA polymerase II (RNAP II) polr2a, supt5h and rdbp. This complex is inactive when in the 7SK snRNP complex form. Regulates cytokine inducible transcription networks by facilitating promoter recognition of target transcription factors. P-TEFb is also involved in cotranscriptional histone modification, mRNA processing and mRNA export. This is Cyclin-dependent kinase 9 from Danio rerio (Zebrafish).